Here is a 745-residue protein sequence, read N- to C-terminus: 5-methyltetrahydropteroyltriglutamate--homocysteine methyltransferase (745 aa).

5-methyltetrahydropteroyltri-L-glutamate contacts are provided by residues 19–22 and K119; that span reads RELK. L-homocysteine contacts are provided by residues 418-420 and E471; that span reads IGS. L-methionine is bound by residues 418-420 and E471; that span reads IGS. 5-methyltetrahydropteroyltri-L-glutamate contacts are provided by residues 502-503 and W548; that span reads RC. Position 586 (D586) interacts with L-homocysteine. D586 is an L-methionine binding site. Position 592 (E592) interacts with 5-methyltetrahydropteroyltri-L-glutamate. H628, C630, and E652 together coordinate Zn(2+). H681 functions as the Proton donor in the catalytic mechanism. C713 is a binding site for Zn(2+).

The protein belongs to the vitamin-B12 independent methionine synthase family. Zn(2+) is required as a cofactor.

The catalysed reaction is 5-methyltetrahydropteroyltri-L-glutamate + L-homocysteine = tetrahydropteroyltri-L-glutamate + L-methionine. Its pathway is amino-acid biosynthesis; L-methionine biosynthesis via de novo pathway; L-methionine from L-homocysteine (MetE route): step 1/1. In terms of biological role, catalyzes the transfer of a methyl group from 5-methyltetrahydrofolate to homocysteine resulting in methionine formation. The protein is 5-methyltetrahydropteroyltriglutamate--homocysteine methyltransferase of Corynebacterium glutamicum (strain ATCC 13032 / DSM 20300 / JCM 1318 / BCRC 11384 / CCUG 27702 / LMG 3730 / NBRC 12168 / NCIMB 10025 / NRRL B-2784 / 534).